The chain runs to 240 residues: Transposase for insertion sequence element IS3411 (240 aa).

Residues 125–240 enclose the Integrase catalytic domain; that stretch reads VAERPDQLWV…RASMVFTKRR (116 aa).

Functionally, involved in the transposition of the insertion sequence. The protein is Transposase for insertion sequence element IS3411 of Escherichia coli.